The following is a 280-amino-acid chain: Phosphatidylserine decarboxylase proenzyme (280 aa).

Active-site charge relay system; for autoendoproteolytic cleavage activity residues include Asp86, His143, and Ser246. The Schiff-base intermediate with substrate; via pyruvic acid; for decarboxylase activity role is filled by Ser246. Residue Ser246 is modified to Pyruvic acid (Ser); by autocatalysis.

The protein belongs to the phosphatidylserine decarboxylase family. PSD-B subfamily. Prokaryotic type I sub-subfamily. Heterodimer of a large membrane-associated beta subunit and a small pyruvoyl-containing alpha subunit. Pyruvate is required as a cofactor. In terms of processing, is synthesized initially as an inactive proenzyme. Formation of the active enzyme involves a self-maturation process in which the active site pyruvoyl group is generated from an internal serine residue via an autocatalytic post-translational modification. Two non-identical subunits are generated from the proenzyme in this reaction, and the pyruvate is formed at the N-terminus of the alpha chain, which is derived from the carboxyl end of the proenzyme. The autoendoproteolytic cleavage occurs by a canonical serine protease mechanism, in which the side chain hydroxyl group of the serine supplies its oxygen atom to form the C-terminus of the beta chain, while the remainder of the serine residue undergoes an oxidative deamination to produce ammonia and the pyruvoyl prosthetic group on the alpha chain. During this reaction, the Ser that is part of the protease active site of the proenzyme becomes the pyruvoyl prosthetic group, which constitutes an essential element of the active site of the mature decarboxylase.

The protein localises to the cell membrane. It carries out the reaction a 1,2-diacyl-sn-glycero-3-phospho-L-serine + H(+) = a 1,2-diacyl-sn-glycero-3-phosphoethanolamine + CO2. The protein operates within phospholipid metabolism; phosphatidylethanolamine biosynthesis; phosphatidylethanolamine from CDP-diacylglycerol: step 2/2. Its function is as follows. Catalyzes the formation of phosphatidylethanolamine (PtdEtn) from phosphatidylserine (PtdSer). The polypeptide is Phosphatidylserine decarboxylase proenzyme (Brevibacillus brevis (strain 47 / JCM 6285 / NBRC 100599)).